Reading from the N-terminus, the 204-residue chain is dITP/XTP pyrophosphatase (204 aa).

8 to 13 (SNNAKK) serves as a coordination point for substrate. Mg(2+) contacts are provided by E43 and D72. The Proton acceptor role is filled by D72. Residues S73, 155 to 158 (FGYD), K180, and 185 to 186 (HR) each bind substrate.

This sequence belongs to the HAM1 NTPase family. In terms of assembly, homodimer. Mg(2+) is required as a cofactor.

It carries out the reaction XTP + H2O = XMP + diphosphate + H(+). It catalyses the reaction dITP + H2O = dIMP + diphosphate + H(+). The enzyme catalyses ITP + H2O = IMP + diphosphate + H(+). Its function is as follows. Pyrophosphatase that catalyzes the hydrolysis of nucleoside triphosphates to their monophosphate derivatives, with a high preference for the non-canonical purine nucleotides XTP (xanthosine triphosphate), dITP (deoxyinosine triphosphate) and ITP. Seems to function as a house-cleaning enzyme that removes non-canonical purine nucleotides from the nucleotide pool, thus preventing their incorporation into DNA/RNA and avoiding chromosomal lesions. The protein is dITP/XTP pyrophosphatase of Cutibacterium acnes (strain DSM 16379 / KPA171202) (Propionibacterium acnes).